Consider the following 400-residue polypeptide: GTPase Obg (400 aa).

Residues methionine 1–leucine 159 enclose the Obg domain. An OBG-type G domain is found at alanine 160–aspartate 333. GTP-binding positions include glycine 166–serine 173, phenylalanine 191–valine 195, aspartate 213–glycine 216, asparagine 283–aspartate 286, and serine 314–isoleucine 316. Mg(2+) is bound by residues serine 173 and threonine 193.

This sequence belongs to the TRAFAC class OBG-HflX-like GTPase superfamily. OBG GTPase family. As to quaternary structure, monomer. It depends on Mg(2+) as a cofactor.

The protein localises to the cytoplasm. Its function is as follows. An essential GTPase which binds GTP, GDP and possibly (p)ppGpp with moderate affinity, with high nucleotide exchange rates and a fairly low GTP hydrolysis rate. Plays a role in control of the cell cycle, stress response, ribosome biogenesis and in those bacteria that undergo differentiation, in morphogenesis control. In Aeromonas salmonicida (strain A449), this protein is GTPase Obg.